A 502-amino-acid chain; its full sequence is MPRGCAGARFACNACLNFLAGLGISEPISPGWAAMERLSGLDAFFLYMETPSQPLNVCCVLELDTSTMPGGYTYGRFHAALEKYVKAAPEFRMKLADTELNLDHPVWVDDDNFQIRHHLRRVAMPAPGGRRELAEICGYIAGLPLDRDRPLWEMWVIEGGARSDTVAVMLKVHHAVVDGVAGANLLSHLCSLQPDAPAPQPVRGTGGGNVLQIAASGLEGFASRPVRLATVVPATVLTLVRTLLRAREGRTMAAPFSAPPTPFNGPLGRLRNIAYTQLDMRDVKRVKDRFGVTINDVVVALCAGALRRFLLEHGVLPEAPLVATVPVSVHDKSDRPGRNQATWMFCRVPSQISDPAQRIRTIAAGNTVAKDHAAAIGPTLLHDWIQFGGSTMFGAAMRILPHISITHSPAYNLILSNVPGPQAQLYFLGCRMDSMFPLGPLLGNAGLNITVMSLNGELGVGIVSCPDLLPDLWGVADGFPEALKELLECSDDQPEGSNHQDS.

H174 acts as the Proton acceptor in catalysis.

Belongs to the long-chain O-acyltransferase family.

It carries out the reaction an acyl-CoA + a 1,2-diacyl-sn-glycerol = a triacyl-sn-glycerol + CoA. The catalysed reaction is di-(9Z)-octadecenoylglycerol + (9Z)-octadecenoyl-CoA = 1,2,3-tri-(9Z-octadecenoyl)-glycerol + CoA. It functions in the pathway glycerolipid metabolism; triacylglycerol biosynthesis. Catalyzes the terminal and only committed step in triacylglycerol synthesis by using diacylglycerol and fatty acyl CoA as substrates. Required for storage lipid synthesis. Its function is as follows. Upon expression in E.coli functions weakly as a triacylglycerol synthase, making triacylglycerol (TG) from diolein and long-chain fatty acyl-CoA. Has very weak wax synthase activity, incorporating palmityl alcohol into wax esters in the presence of palmitoyl-CoA. In Mycobacterium tuberculosis (strain ATCC 25618 / H37Rv), this protein is Putative diacyglycerol O-acyltransferase Rv1760.